A 206-amino-acid chain; its full sequence is Large ribosomal subunit protein uL4 (206 aa).

Residues 63–97 (MYKQKGTGRARHHSARAPQFRGGGKAHGPVVRSHE) are disordered. A compositionally biased stretch (basic residues) spans 64–77 (YKQKGTGRARHHSA).

Belongs to the universal ribosomal protein uL4 family. Part of the 50S ribosomal subunit.

Functionally, one of the primary rRNA binding proteins, this protein initially binds near the 5'-end of the 23S rRNA. It is important during the early stages of 50S assembly. It makes multiple contacts with different domains of the 23S rRNA in the assembled 50S subunit and ribosome. Its function is as follows. Forms part of the polypeptide exit tunnel. This chain is Large ribosomal subunit protein uL4, found in Rhizobium leguminosarum bv. trifolii (strain WSM2304).